The sequence spans 256 residues: Chloroplastic group IIB intron splicing facilitator CRS2, chloroplastic (256 aa).

The N-terminal 45 residues, 1 to 45, are a transit peptide targeting the chloroplast; sequence MSLLAAAIPSTSSHFSAPFLPSFRMPRKSLTAPLHRIRRPRPFTV. Tyrosine 74 provides a ligand contact to tRNA. Histidine 79 acts as the Proton acceptor in catalysis. TRNA is bound by residues tyrosine 124, asparagine 126, and asparagine 172.

The protein belongs to the PTH family. CRS2 subfamily. Interacts with CAF1 and CAF2. Part of large ribonucleo-protein complexes that include group IIB introns and either CAF1 or CAF2.

The protein resides in the plastid. It is found in the chloroplast stroma. Functionally, required for the splicing of group IIB introns in chloroplasts. Forms complexes with either CAF1 or CAF2 which, in turn, interact with RNA and confer intron specificity of the splicing particles. Has no peptidyl-tRNA hydrolase activity. In Zea mays (Maize), this protein is Chloroplastic group IIB intron splicing facilitator CRS2, chloroplastic (CRS2).